A 499-amino-acid chain; its full sequence is Glycerol kinase (499 aa).

ADP is bound at residue T13. The ATP site is built by T13, T14, and S15. T13 serves as a coordination point for sn-glycerol 3-phosphate. Residue R17 participates in ADP binding. 4 residues coordinate sn-glycerol 3-phosphate: R83, E84, Y135, and D245. Glycerol contacts are provided by R83, E84, Y135, D245, and Q246. The ADP site is built by T267 and G310. Residues T267, G310, Q314, and G411 each coordinate ATP. ADP contacts are provided by G411 and N415.

The protein belongs to the FGGY kinase family.

The enzyme catalyses glycerol + ATP = sn-glycerol 3-phosphate + ADP + H(+). It participates in polyol metabolism; glycerol degradation via glycerol kinase pathway; sn-glycerol 3-phosphate from glycerol: step 1/1. Inhibited by fructose 1,6-bisphosphate (FBP). Key enzyme in the regulation of glycerol uptake and metabolism. Catalyzes the phosphorylation of glycerol to yield sn-glycerol 3-phosphate. The sequence is that of Glycerol kinase from Xanthomonas euvesicatoria pv. vesicatoria (strain 85-10) (Xanthomonas campestris pv. vesicatoria).